Consider the following 832-residue polypeptide: pre-rRNA 2'-O-ribose RNA methyltransferase FTSJ3 (832 aa).

Residues Gly-56, Trp-58, Asp-76, Asp-92, and Asp-117 each contribute to the S-adenosyl-L-methionine site. Lys-157 serves as the catalytic Proton acceptor. Disordered regions lie at residues 332–358 (INLS…ADEM), 485–523 (RLER…LEEK), and 546–631 (DADE…GLVE). Composition is skewed to basic and acidic residues over residues 345 to 358 (EEEK…ADEM) and 485 to 495 (RLERERREQGV). Residues 503-514 (EEEEEEEEEEEN) show a composition bias toward acidic residues. The span at 570–579 (KTKKKGQKKK) shows a compositional bias: basic residues. The segment covering 600–618 (AEAEAEQSSDDDSSSDEEG) has biased composition (acidic residues). The stretch at 726–758 (IKKVAEAKARKKRRMLKKMEQMKKKAEAVVSTV) forms a coiled coil. The segment at 795–832 (GPRVRRPPGVKGQFKVVDSRLKKDVRAQKRKEQKKRRK) is disordered. A compositionally biased stretch (basic and acidic residues) spans 811–821 (VDSRLKKDVRA). Over residues 822–832 (QKRKEQKKRRK) the composition is skewed to basic residues.

Belongs to the class I-like SAM-binding methyltransferase superfamily. RNA methyltransferase RlmE family. SPB1 subfamily. Interacts with NIP7.

Its subcellular location is the nucleus. It is found in the nucleolus. It catalyses the reaction a ribonucleotide in rRNA + S-adenosyl-L-methionine = a 2'-O-methylribonucleotide in rRNA + S-adenosyl-L-homocysteine + H(+). Functionally, RNA 2'-O-methyltransferase involved in the processing of the 34S pre-rRNA to 18S rRNA and in 40S ribosomal subunit formation. This chain is pre-rRNA 2'-O-ribose RNA methyltransferase FTSJ3, found in Gallus gallus (Chicken).